The chain runs to 250 residues: tRNA pseudouridine synthase A (250 aa).

Asp-53 (nucleophile) is an active-site residue. Tyr-111 is a substrate binding site.

This sequence belongs to the tRNA pseudouridine synthase TruA family. Homodimer.

It catalyses the reaction uridine(38/39/40) in tRNA = pseudouridine(38/39/40) in tRNA. Functionally, formation of pseudouridine at positions 38, 39 and 40 in the anticodon stem and loop of transfer RNAs. The sequence is that of tRNA pseudouridine synthase A from Streptococcus uberis (strain ATCC BAA-854 / 0140J).